The following is a 475-amino-acid chain: Glutamate--tRNA ligase 2 (475 aa).

The short motif at 11–21 is the 'HIGH' region element; the sequence is PSPTGFLHIGG. The span at 116–133 shows a compositional bias: basic and acidic residues; that stretch reads AEGRPPRYDGTWRDKDPA. The disordered stretch occupies residues 116–137; that stretch reads AEGRPPRYDGTWRDKDPAEAPS. A 'KMSKS' region motif is present at residues 240–244; the sequence is KLSKR. Position 243 (K243) interacts with ATP.

Belongs to the class-I aminoacyl-tRNA synthetase family. Glutamate--tRNA ligase type 1 subfamily. In terms of assembly, monomer.

It localises to the cytoplasm. It catalyses the reaction tRNA(Glu) + L-glutamate + ATP = L-glutamyl-tRNA(Glu) + AMP + diphosphate. Its function is as follows. Catalyzes the attachment of glutamate to tRNA(Glu) in a two-step reaction: glutamate is first activated by ATP to form Glu-AMP and then transferred to the acceptor end of tRNA(Glu). The protein is Glutamate--tRNA ligase 2 of Chelativorans sp. (strain BNC1).